The chain runs to 626 residues: ATP-dependent zinc metalloprotease FtsH 3 (626 aa).

Over 1-7 (MNKLFRS) the chain is Cytoplasmic. A helical transmembrane segment spans residues 8 to 28 (LAFYMLILVISVAIAVQLGGT). Residues 29–103 (SQQTTQLVYS…LDFRQDNTSG (75 aa)) are Extracellular-facing. A helical transmembrane segment spans residues 104 to 124 (IWAMLLQTLVPVVLVLLAFFF). Topologically, residues 125-626 (IMQQTQGSGN…GGTSQVAPAF (502 aa)) are cytoplasmic. ATP is bound at residue 197–204 (GPPGTGKT). H420 lines the Zn(2+) pocket. The active site involves E421. 2 residues coordinate Zn(2+): H424 and D496. The interval 602–626 (PPRPKPEPLKPRMVGGGTSQVAPAF) is disordered.

This sequence in the central section; belongs to the AAA ATPase family. The protein in the C-terminal section; belongs to the peptidase M41 family. Homohexamer. Zn(2+) serves as cofactor.

The protein resides in the cell membrane. Acts as a processive, ATP-dependent zinc metallopeptidase for both cytoplasmic and membrane proteins. Plays a role in the quality control of integral membrane proteins. The polypeptide is ATP-dependent zinc metalloprotease FtsH 3 (Symbiobacterium thermophilum (strain DSM 24528 / JCM 14929 / IAM 14863 / T)).